A 180-amino-acid chain; its full sequence is Sec-independent protein translocase protein TatB (180 aa).

The chain crosses the membrane as a helical span at residues 1 to 21; sequence MFDIGWSELLVIGVVALIAIG. Positions 95-180 are disordered; that stretch reads IEGVDKPVES…AERLKDAKAS (86 aa). Positions 103–123 are enriched in low complexity; sequence ESQPAASAAPETSATVEAPAT. The span at 170-180 shows a compositional bias: basic and acidic residues; it reads EAERLKDAKAS.

It belongs to the TatB family. As to quaternary structure, the Tat system comprises two distinct complexes: a TatABC complex, containing multiple copies of TatA, TatB and TatC subunits, and a separate TatA complex, containing only TatA subunits. Substrates initially bind to the TatABC complex, which probably triggers association of the separate TatA complex to form the active translocon.

It is found in the cell inner membrane. Its function is as follows. Part of the twin-arginine translocation (Tat) system that transports large folded proteins containing a characteristic twin-arginine motif in their signal peptide across membranes. Together with TatC, TatB is part of a receptor directly interacting with Tat signal peptides. TatB may form an oligomeric binding site that transiently accommodates folded Tat precursor proteins before their translocation. The sequence is that of Sec-independent protein translocase protein TatB from Bradyrhizobium sp. (strain BTAi1 / ATCC BAA-1182).